The sequence spans 747 residues: MARSKTAQPKHSLRKIAVVVATAVSGMSVYAQAAVEPKEDTITVTAAPAPQESAWGPAATIAARQSATGTKTDTPIQKVPQSISVVTAEEMALHQPKSVKEALSYTPGVSVGTRGASNTYDHLIIRGFAAEGQSQNNYLNGLKLQGNFYNDAVIDPYMLERAEIMRGPVSVLYGKSSPGGLLNMVSKRPTTEPLKEVQFKAGTDSLFQTGFDFSDSLDDDGVYSYRLTGLARSANAQQKGSEEQRYAIAPAFTWRPDDKTNFTFLSYFQNEPETGYYGWLPKEGTVEPLPNGKRLPTDFNEGAKNNTYSRNEKMVGYSFDHEFNDTFTVRQNLRFAENKTSQNSVYGYGVCSDPANAYSKQCAALAPADKGHYLARKYVVDDEKLQNFSVDTQLQSKFATGDIDHTLLTGVDFMRMRNDINAWFGYDDSVPLLNLYNPVNTDFDFNAKDPANSGPYRILNKQKQTGVYVQDQAQWDKVLVTLGGRYDWADQESLNRVAGTTDKRDDKQFTWRGGVNYLFDNGVTPYFSYSESFEPSSQVGKDGNIFAPSKGKQYEVGVKYVPEDRPIVVTGAVYNLTKTNNLMADPEGSFFSVEGGEIRARGVEIEAKAALSASVNVVGSYTYTDAEYTTDTTYKGNTPAQVPKHMASLWADYTFFDGPLSGLTLGTGGRYTGSSYGDPANSFKVGSYTVVDALVRYDLARVGMAGSNVALHVNNLFDREYVASCFNTYGCFWGAERQVVATATFRF.

The N-terminal stretch at 1–33 is a signal peptide; sequence MARSKTAQPKHSLRKIAVVVATAVSGMSVYAQA. Over 34–192 the chain is Periplasmic; the sequence is AVEPKEDTIT…NMVSKRPTTE (159 aa). The TonB box signature appears at 40–47; that stretch reads DTITVTAA. The region spanning 75–187 is the TBDR plug domain; the sequence is PIQKVPQSIS…PGGLLNMVSK (113 aa). Residues Arg114, Gln133, and 148–149 each bind ferrichrome; that span reads FY. In terms of domain architecture, TBDR beta-barrel spans 192 to 747; the sequence is EPLKEVQFKA…QVVATATFRF (556 aa). A beta stranded transmembrane segment spans residues 193–201; it reads PLKEVQFKA. Over 202-206 the chain is Extracellular; the sequence is GTDSL. A beta stranded transmembrane segment spans residues 207–215; the sequence is FQTGFDFSD. Residues 216-222 lie on the Periplasmic side of the membrane; sequence SLDDDGV. The beta stranded transmembrane segment at 223–231 threads the bilayer; that stretch reads YSYRLTGLA. Residues 232-245 lie on the Extracellular side of the membrane; the sequence is RSANAQQKGSEEQR. Residues 246 to 255 traverse the membrane as a beta stranded segment; the sequence is YAIAPAFTWR. The Periplasmic segment spans residues 256–259; the sequence is PDDK. A beta stranded transmembrane segment spans residues 260–268; that stretch reads TNFTFLSYF. Residues 269 to 312 lie on the Extracellular side of the membrane; it reads QNEPETGYYGWLPKEGTVEPLPNGKRLPTDFNEGAKNNTYSRNE. 277–279 is a ferrichrome binding site; that stretch reads YGW. A beta stranded transmembrane segment spans residues 313-321; it reads KMVGYSFDH. Topologically, residues 322-326 are periplasmic; that stretch reads EFNDT. Residues 327-335 traverse the membrane as a beta stranded segment; that stretch reads FTVRQNLRF. Residues 336–387 are Extracellular-facing; it reads AENKTSQNSVYGYGVCSDPANAYSKQCAALAPADKGHYLARKYVVDDEKLQN. Ferrichrome is bound at residue 346-348; sequence YGY. Cys351 and Cys362 are oxidised to a cystine. The beta stranded transmembrane segment at 388 to 396 threads the bilayer; that stretch reads FSVDTQLQS. Over 397 to 404 the chain is Periplasmic; sequence KFATGDID. A beta stranded transmembrane segment spans residues 405 to 413; it reads HTLLTGVDF. Over 414 to 464 the chain is Extracellular; sequence MRMRNDINAWFGYDDSVPLLNLYNPVNTDFDFNAKDPANSGPYRILNKQKQ. Position 424 (Phe424) interacts with ferrichrome. The chain crosses the membrane as a beta stranded span at residues 465–473; sequence TGVYVQDQA. Over 474–477 the chain is Periplasmic; sequence QWDK. The beta stranded transmembrane segment at 478–486 threads the bilayer; it reads VLVTLGGRY. Over 487–508 the chain is Extracellular; the sequence is DWADQESLNRVAGTTDKRDDKQ. Residues 509-517 form a beta stranded membrane-spanning segment; sequence FTWRGGVNY. The Periplasmic portion of the chain corresponds to 518–522; that stretch reads LFDNG. A beta stranded transmembrane segment spans residues 523–531; sequence VTPYFSYSE. The Extracellular portion of the chain corresponds to 532–551; it reads SFEPSSQVGKDGNIFAPSKG. The beta stranded transmembrane segment at 552 to 560 threads the bilayer; the sequence is KQYEVGVKY. Over 561-565 the chain is Periplasmic; it reads VPEDR. A beta stranded transmembrane segment spans residues 566-574; that stretch reads PIVVTGAVY. Residues 575-601 lie on the Extracellular side of the membrane; it reads NLTKTNNLMADPEGSFFSVEGGEIRAR. Residues 602-610 traverse the membrane as a beta stranded segment; the sequence is GVEIEAKAA. Residues 611-613 lie on the Periplasmic side of the membrane; sequence LSA. A beta stranded membrane pass occupies residues 614 to 622; that stretch reads SVNVVGSYT. Residues 623-645 lie on the Extracellular side of the membrane; it reads YTDAEYTTDTTYKGNTPAQVPKH. Residues 646–654 form a beta stranded membrane-spanning segment; that stretch reads MASLWADYT. Topologically, residues 655 to 661 are periplasmic; that stretch reads FFDGPLS. A beta stranded transmembrane segment spans residues 662 to 670; it reads GLTLGTGGR. Residues 671-689 are Extracellular-facing; it reads YTGSSYGDPANSFKVGSYT. Residues 690 to 698 form a beta stranded membrane-spanning segment; that stretch reads VVDALVRYD. At 699 to 705 the chain is on the periplasmic side; the sequence is LARVGMA. A beta stranded transmembrane segment spans residues 706-714; it reads GSNVALHVN. Residues 715–737 are Extracellular-facing; it reads NLFDREYVASCFNTYGCFWGAER. A disulfide bridge links Cys725 with Cys731. A TonB C-terminal box motif is present at residues 730–747; it reads GCFWGAERQVVATATFRF. Position 735 (Ala735) interacts with ferrichrome. The chain crosses the membrane as a beta stranded span at residues 738 to 746; it reads QVVATATFR. Position 747 (Phe747) is a topological domain, periplasmic.

This sequence belongs to the TonB-dependent receptor family. Monomer. Interacts with TonB. Interacts with Escherichia phage T5 receptor-binding protein pb5 (RBP-pb5); this interaction is necessary for the entry of the viral genome into the host cell.

It localises to the cell outer membrane. With respect to regulation, binding of ferrichrome or colicin M enhances the interaction between FhuA and TonB. TonB activates FhuA through interaction with the beta-barrel. In terms of biological role, involved in the uptake of iron in complex with ferrichrome, a hydroxamate-type siderophore. Binds and transports ferrichrome-iron across the outer membrane. In addition to its role in ferrichrome-iron transport, transports the antibiotic albomycin, which is a structural analog of ferrichrome, and acts as a receptor for colicin M, microcin J25 and bacteriophages T1, T5, phi80 and UC-1. The energy source, which is required for all FhuA functions except infection by phage T5, is provided by the inner membrane TonB system. The chain is Ferrichrome outer membrane transporter/phage receptor from Escherichia coli (strain K12).